Here is a 1178-residue protein sequence, read N- to C-terminus: DNA-directed RNA polymerase subunit beta (1178 aa).

Residues 1-37 (MLEGCILADSRQSKTAASPSPSRPQSSSNNSVPGAPN) are disordered. The span at 18–33 (SPSPSRPQSSSNNSVP) shows a compositional bias: low complexity.

It belongs to the RNA polymerase beta chain family. In terms of assembly, the RNAP catalytic core consists of 2 alpha, 1 beta, 1 beta' and 1 omega subunit. When a sigma factor is associated with the core the holoenzyme is formed, which can initiate transcription.

It catalyses the reaction RNA(n) + a ribonucleoside 5'-triphosphate = RNA(n+1) + diphosphate. Functionally, DNA-dependent RNA polymerase catalyzes the transcription of DNA into RNA using the four ribonucleoside triphosphates as substrates. The protein is DNA-directed RNA polymerase subunit beta of Mycobacterium tuberculosis (strain CDC 1551 / Oshkosh).